A 480-amino-acid chain; its full sequence is UDP-glucose 6-dehydrogenase 5 (480 aa).

Residues 8 to 13 (GAGYVG), D33, R38, 86 to 90 (VNTPT), 127 to 128 (ST), and E161 contribute to the NAD(+) site. Residues 157-161 (EFLAE), 216-223 (KLAANAFL), and 256-269 (RIGP…VGFG) each bind substrate. Residue C272 is the Nucleophile of the active site. 272–275 (CFQK) lines the NAD(+) pocket. 334-335 (FK) is a substrate binding site. R342 contacts NAD(+). Position 393 is a phosphoserine (S393). R447 provides a ligand contact to substrate.

Belongs to the UDP-glucose/GDP-mannose dehydrogenase family.

The enzyme catalyses UDP-alpha-D-glucose + 2 NAD(+) + H2O = UDP-alpha-D-glucuronate + 2 NADH + 3 H(+). The protein operates within nucleotide-sugar biosynthesis; UDP-alpha-D-glucuronate biosynthesis; UDP-alpha-D-glucuronate from UDP-alpha-D-glucose: step 1/1. Functionally, involved in the biosynthesis of UDP-glucuronic acid (UDP-GlcA), providing nucleotide sugars for cell-wall polymers. In Oryza sativa subsp. japonica (Rice), this protein is UDP-glucose 6-dehydrogenase 5 (UGD5).